The following is a 486-amino-acid chain: uncharacterized protein (486 aa).

The protein belongs to the UbiD family.

This is an uncharacterized protein from Aquifex aeolicus (strain VF5).